The chain runs to 383 residues: Cytochrome b (383 aa).

Transmembrane regions (helical) follow at residues 35 to 55, 79 to 100, 115 to 135, and 180 to 200; these read FGSI…ILSM, WLFR…YIHI, WGIG…GYVL, and FFSL…LHLF. Heme b contacts are provided by H85 and H99. 2 residues coordinate heme b: H184 and H198. H203 contributes to the a ubiquinone binding site. A run of 4 helical transmembrane segments spans residues 228–248, 290–310, 321–341, and 348–368; these read IKDL…NFQF, LGGV…IFYN, LNKI…WLGK, and FTNI…LNFY.

The protein belongs to the cytochrome b family. The main subunits of complex b-c1 are: cytochrome b, cytochrome c1 and the Rieske protein. Requires heme b as cofactor.

The protein localises to the mitochondrion inner membrane. Component of the ubiquinol-cytochrome c reductase complex (complex III or cytochrome b-c1 complex) that is part of the mitochondrial respiratory chain. The b-c1 complex mediates electron transfer from ubiquinol to cytochrome c. Contributes to the generation of a proton gradient across the mitochondrial membrane that is then used for ATP synthesis. The polypeptide is Cytochrome b (MT-CYB) (Apis mellifera ligustica (Common honeybee)).